The primary structure comprises 301 residues: uncharacterized protein (301 aa).

2 disordered regions span residues 167–186 (DVHL…PKER) and 225–244 (ASES…EGAS). Polar residues predominate over residues 170–181 (LNSTTPPHTAQV). A compositionally biased stretch (low complexity) spans 226–237 (SESSLETSSVSS).

This is an uncharacterized protein from Mus musculus (Mouse).